The primary structure comprises 537 residues: Phosphoenolpyruvate carboxykinase (ATP) (537 aa).

3 residues coordinate substrate: Arg-61, Tyr-195, and Lys-201. Residues Lys-201, His-220, and 236–244 (GLSGTGKTT) each bind ATP. Lys-201 and His-220 together coordinate Mn(2+). Asp-257 serves as a coordination point for Mn(2+). ATP-binding residues include Glu-285, Arg-323, and Thr-448. Arg-323 serves as a coordination point for substrate.

This sequence belongs to the phosphoenolpyruvate carboxykinase (ATP) family. Mn(2+) serves as cofactor.

The protein resides in the cytoplasm. The catalysed reaction is oxaloacetate + ATP = phosphoenolpyruvate + ADP + CO2. It participates in carbohydrate biosynthesis; gluconeogenesis. Functionally, involved in the gluconeogenesis. Catalyzes the conversion of oxaloacetate (OAA) to phosphoenolpyruvate (PEP) through direct phosphoryl transfer between the nucleoside triphosphate and OAA. This is Phosphoenolpyruvate carboxykinase (ATP) from Parvibaculum lavamentivorans (strain DS-1 / DSM 13023 / NCIMB 13966).